Reading from the N-terminus, the 864-residue chain is Dynamin-1 (864 aa).

A Dynamin-type G domain is found at 28-294 (DLDLPQIAVV…LTNHIRDTLP (267 aa)). The G1 motif stretch occupies residues 38–45 (GGQSAGKS). Positions 41, 43, 44, 45, 46, 59, and 60 each coordinate GDP. The tract at residues 64–66 (VTR) is G2 motif. Tyrosine 80 carries the post-translational modification Phosphotyrosine. Position 125 is a 3'-nitrotyrosine; alternate (tyrosine 125). A Phosphotyrosine; alternate modification is found at tyrosine 125. Residues 136 to 139 (DLPG) form a G3 motif region. The interval 205 to 208 (TKLD) is G4 motif. Positions 206, 208, 211, 236, 237, and 239 each coordinate GDP. Positions 235-238 (VNRS) are G5 motif. 2 positions are modified to phosphoserine: serine 306 and serine 347. Tyrosine 354 carries the post-translational modification Phosphotyrosine. Serine 512 bears the Phosphoserine mark. The PH domain occupies 519 to 625 (LVIRKGWLTI…WKASFLRAGV (107 aa)). Residues 659–750 (VETIRNLVDS…IIGDINTTTV (92 aa)) enclose the GED domain. A disordered region spans residues 767–864 (SVPAGRRSPT…PESPRPPFDL (98 aa)). Position 774 is a phosphoserine; by CDK5 (serine 774). Residue serine 778 is modified to Phosphoserine. Arginine 796 is modified (omega-N-methylarginine). The residue at position 822 (serine 822) is a Phosphoserine. Pro residues predominate over residues 825–843 (PFGPPPQVPSRPNRAPPGV). A phosphoserine mark is found at serine 851 and serine 857.

It belongs to the TRAFAC class dynamin-like GTPase superfamily. Dynamin/Fzo/YdjA family. As to quaternary structure, homodimer; homodimerization is mediated by the dynamin-type G domain which promotes assembly-stimulated GTPase activity. Homo-tetramer formed from two dimers in the absence of lipid. Oligomerizes into a helical polymer that self-assembles around the vesicle membrane, when associated to the menbrane through lipid binding. Interacts (via C-terminal proline-rich domain (PRD)) with SNX9 (via SH3 domain); this interaction allows regulation of DNM1 self-assembly during late stages of endocytic vesicle formation and supports DNM1's early functions in accelerating clathrin-coated pits (CCPs) maturation in non neuronals cell. Interacts (via C-terminal proline-rich domain (PRD)) with MYO1E (via SH3 domain); this interaction regulates receptor-mediated endocytosis. Interacts with SNX33 (via SH3 domain); this interaction decreases DNM1-dependent endocytosis. Interacts with DIAPH1. Interacts with GRB2 (via SH3 domain); this interaction mediates disassembly of DNM1 polymers, therefore modulates self-assembly. Forms a complex with BIN1 (via SH3 domain) and SH3GL2 (via SH3 domain). Forms a complex with SH3GL2 (via SH3 domain) and AMPH (via SH3 domain). Forms a complex with SH3GL2 (via SH3 domain) and SYNJ1. Interacts with AMPH. Interacts (via C-terminal proline-rich domain (PRD)) with SYT1; this interaction facilitates vesicle fission during clathrin-mediated endocytosis (CME). Interacts (via C-terminal proline-rich domain (PRD)) with PLCG1 (via SH3 domain); this interaction stimulates the release of GDP from DNM1 and enhances DNM1-dependent endocytosis. Interacts with SNPH; this interaction inhibits the binding of DNM1 to AMPH and DNM1-receptor-mediated endocytosis. Interacts with CAV1. Interacts with SH3GLB1 (via SH3 domain). Interacts with PACSIN1 (via SH3 domain), PACSIN2 (via SH3 domain) and PACSIN3 (via SH3 domain). Interacts with UNC119; this interaction decreases DNM1's GTPase activity and affects DNM1's interaction with AMPH. Interacts (GTP-bound form) with DNAJC6; this interaction allows clathrin-coated vesicle (CCV) formation at the plasma membrane. Phosphorylation at Ser-774 by GSK3B/GSK3-beta leads to inactivation of receptor-mediated endocytosis in non-neuronal cells. Dephosphorylation at Ser-774, through the EGFR downstream signaling, leads to activation and regulates early stages of clathrin-mediated endocytosis (CME). Phosphorylated by CDK5 leading to synaptic vesicle endocytosis (SVE) activation. Brain-specific (peripheral sensory neurons).

The protein resides in the cytoplasmic vesicle. It localises to the clathrin-coated vesicle. Its subcellular location is the golgi apparatus. The protein localises to the cell membrane. It is found in the membrane. The protein resides in the clathrin-coated pit. It localises to the presynapse. Its subcellular location is the secretory vesicle. The protein localises to the chromaffin granule. The catalysed reaction is GTP + H2O = GDP + phosphate + H(+). Functionally, catalyzes the hydrolysis of GTP and utilizes this energy to mediate vesicle scission and participates in many forms of endocytosis, such as clathrin-mediated endocytosis or synaptic vesicle endocytosis as well as rapid endocytosis (RE). Associates to the membrane, through lipid binding, and self-assembles into rings and stacks of interconnected rings through oligomerization to form a helical polymer around the vesicle membrane leading to constriction of invaginated coated pits around their necks. Self-assembly of the helical polymer induces membrane tubules narrowing until the polymer reaches a length sufficient to trigger GTP hydrolysis. Depending on the curvature imposed on the tubules, membrane detachment from the helical polymer upon GTP hydrolysis can cause spontaneous hemifission followed by complete fission. May play a role in regulating early stages of clathrin-mediated endocytosis in non-neuronal cells through its activation by dephosphorylation via the signaling downstream of EGFR. Controls vesicle size at a step before fission, during formation of membrane pits, at hippocampal synapses. Controls plastic adaptation of the synaptic vesicle recycling machinery to high levels of activity. Mediates rapid endocytosis (RE), a Ca(2+)-dependent and clathrin- and K(+)-independent process in chromaffin cells. Microtubule-associated force-producing protein involved in producing microtubule bundles and able to bind and hydrolyze GTP. Through its interaction with DNAJC6, acts during the early steps of clathrin-coated vesicle (CCV) formation. The protein is Dynamin-1 (Dnm1) of Rattus norvegicus (Rat).